The following is a 334-amino-acid chain: Methionine import ATP-binding protein MetN (334 aa).

The region spanning 7 to 246 is the ABC transporter domain; it reads VEFRSVSKVF…PRSAPARAFV (240 aa). Residue 43-50 participates in ATP binding; it reads GYSGAGKS.

This sequence belongs to the ABC transporter superfamily. Methionine importer (TC 3.A.1.24) family. In terms of assembly, the complex is composed of two ATP-binding proteins (MetN), two transmembrane proteins (MetI) and a solute-binding protein (MetQ).

It localises to the cell membrane. It carries out the reaction L-methionine(out) + ATP + H2O = L-methionine(in) + ADP + phosphate + H(+). The catalysed reaction is D-methionine(out) + ATP + H2O = D-methionine(in) + ADP + phosphate + H(+). Part of the ABC transporter complex MetNIQ involved in methionine import. Responsible for energy coupling to the transport system. This is Methionine import ATP-binding protein MetN from Nocardia farcinica (strain IFM 10152).